Here is a 176-residue protein sequence, read N- to C-terminus: Crossover junction endodeoxyribonuclease RuvC (176 aa).

Catalysis depends on residues Asp7, Glu67, and Asp139. Positions 7, 67, and 139 each coordinate Mg(2+).

The protein belongs to the RuvC family. In terms of assembly, homodimer which binds Holliday junction (HJ) DNA. The HJ becomes 2-fold symmetrical on binding to RuvC with unstacked arms; it has a different conformation from HJ DNA in complex with RuvA. In the full resolvosome a probable DNA-RuvA(4)-RuvB(12)-RuvC(2) complex forms which resolves the HJ. It depends on Mg(2+) as a cofactor.

The protein localises to the cytoplasm. The enzyme catalyses Endonucleolytic cleavage at a junction such as a reciprocal single-stranded crossover between two homologous DNA duplexes (Holliday junction).. Functionally, the RuvA-RuvB-RuvC complex processes Holliday junction (HJ) DNA during genetic recombination and DNA repair. Endonuclease that resolves HJ intermediates. Cleaves cruciform DNA by making single-stranded nicks across the HJ at symmetrical positions within the homologous arms, yielding a 5'-phosphate and a 3'-hydroxyl group; requires a central core of homology in the junction. The consensus cleavage sequence is 5'-(A/T)TT(C/G)-3'. Cleavage occurs on the 3'-side of the TT dinucleotide at the point of strand exchange. HJ branch migration catalyzed by RuvA-RuvB allows RuvC to scan DNA until it finds its consensus sequence, where it cleaves and resolves the cruciform DNA. This chain is Crossover junction endodeoxyribonuclease RuvC, found in Pelobacter propionicus (strain DSM 2379 / NBRC 103807 / OttBd1).